The following is a 340-amino-acid chain: Dihydroorotate dehydrogenase (quinone) (340 aa).

FMN is bound by residues 61 to 65 (AGLDK) and Thr85. Lys65 lines the substrate pocket. A substrate-binding site is contributed by 110-114 (NRMGF). Residues Asn138 and Asn171 each coordinate FMN. Asn171 provides a ligand contact to substrate. Residue Ser174 is the Nucleophile of the active site. Asn176 lines the substrate pocket. 2 residues coordinate FMN: Lys216 and Thr244. Residue 245–246 (NT) participates in substrate binding. Residues Gly267, Gly296, and 317–318 (YS) each bind FMN.

This sequence belongs to the dihydroorotate dehydrogenase family. Type 2 subfamily. Monomer. Requires FMN as cofactor.

It is found in the cell membrane. It catalyses the reaction (S)-dihydroorotate + a quinone = orotate + a quinol. Its pathway is pyrimidine metabolism; UMP biosynthesis via de novo pathway; orotate from (S)-dihydroorotate (quinone route): step 1/1. Catalyzes the conversion of dihydroorotate to orotate with quinone as electron acceptor. This is Dihydroorotate dehydrogenase (quinone) from Pseudomonas putida (strain ATCC 47054 / DSM 6125 / CFBP 8728 / NCIMB 11950 / KT2440).